The primary structure comprises 206 residues: Large ribosomal subunit protein bL17 (206 aa).

The span at 130–141 (ERARGTRFEARR) shows a compositional bias: basic and acidic residues. The disordered stretch occupies residues 130-206 (ERARGTRFEA…SGAGEQNSAN (77 aa)). 2 stretches are compositionally biased toward low complexity: residues 160 to 181 (TAAA…GAAG) and 189 to 200 (DDSGIGDDSGAG).

Belongs to the bacterial ribosomal protein bL17 family. In terms of assembly, part of the 50S ribosomal subunit. Contacts protein L32.

The chain is Large ribosomal subunit protein bL17 from Frankia casuarinae (strain DSM 45818 / CECT 9043 / HFP020203 / CcI3).